Here is a 681-residue protein sequence, read N- to C-terminus: Methionine--tRNA ligase (681 aa).

A 'HIGH' region motif is present at residues 14–24; that stretch reads PYANGSIHLGH. Zn(2+)-binding residues include Cys-145, Cys-148, Cys-158, and Cys-161. The 'KMSKS' region signature appears at 331–335; sequence KMSKS. Residue Lys-334 participates in ATP binding. Positions 579 to 681 constitute a tRNA-binding domain; it reads AFAAIDLRVA…SGAKPGQRIK (103 aa).

This sequence belongs to the class-I aminoacyl-tRNA synthetase family. MetG type 1 subfamily. As to quaternary structure, homodimer. It depends on Zn(2+) as a cofactor.

It localises to the cytoplasm. The enzyme catalyses tRNA(Met) + L-methionine + ATP = L-methionyl-tRNA(Met) + AMP + diphosphate. Its function is as follows. Is required not only for elongation of protein synthesis but also for the initiation of all mRNA translation through initiator tRNA(fMet) aminoacylation. The protein is Methionine--tRNA ligase of Pseudomonas fluorescens (strain ATCC BAA-477 / NRRL B-23932 / Pf-5).